A 326-amino-acid polypeptide reads, in one-letter code: GTP 3',8-cyclase (326 aa).

Positions 7–232 constitute a Radical SAM core domain; sequence GFGRSFPYLR…PRAADAGPAR (226 aa). Arginine 16 is a binding site for GTP. Cysteine 23 and cysteine 27 together coordinate [4Fe-4S] cluster. Position 29 (tyrosine 29) interacts with S-adenosyl-L-methionine. Cysteine 30 serves as a coordination point for [4Fe-4S] cluster. Residue arginine 65 coordinates GTP. Residue glycine 69 participates in S-adenosyl-L-methionine binding. Threonine 96 is a binding site for GTP. Serine 120 provides a ligand contact to S-adenosyl-L-methionine. GTP is bound at residue lysine 157. Methionine 191 contacts S-adenosyl-L-methionine. Residues cysteine 254 and cysteine 257 each contribute to the [4Fe-4S] cluster site. 259–261 lines the GTP pocket; it reads RLR. Cysteine 271 serves as a coordination point for [4Fe-4S] cluster.

This sequence belongs to the radical SAM superfamily. MoaA family. As to quaternary structure, monomer and homodimer. [4Fe-4S] cluster serves as cofactor.

It catalyses the reaction GTP + AH2 + S-adenosyl-L-methionine = (8S)-3',8-cyclo-7,8-dihydroguanosine 5'-triphosphate + 5'-deoxyadenosine + L-methionine + A + H(+). The protein operates within cofactor biosynthesis; molybdopterin biosynthesis. Functionally, catalyzes the cyclization of GTP to (8S)-3',8-cyclo-7,8-dihydroguanosine 5'-triphosphate. In Stenotrophomonas maltophilia (strain R551-3), this protein is GTP 3',8-cyclase.